The following is a 354-amino-acid chain: Uroporphyrinogen decarboxylase (354 aa).

Substrate contacts are provided by residues 27 to 31 (RQAGR), aspartate 77, tyrosine 154, threonine 209, and histidine 327.

Belongs to the uroporphyrinogen decarboxylase family. As to quaternary structure, homodimer.

Its subcellular location is the cytoplasm. It catalyses the reaction uroporphyrinogen III + 4 H(+) = coproporphyrinogen III + 4 CO2. It participates in porphyrin-containing compound metabolism; protoporphyrin-IX biosynthesis; coproporphyrinogen-III from 5-aminolevulinate: step 4/4. Catalyzes the decarboxylation of four acetate groups of uroporphyrinogen-III to yield coproporphyrinogen-III. This Actinobacillus pleuropneumoniae serotype 5b (strain L20) protein is Uroporphyrinogen decarboxylase.